The primary structure comprises 621 residues: DNA mismatch repair protein MutL (621 aa).

This sequence belongs to the DNA mismatch repair MutL/HexB family.

Its function is as follows. This protein is involved in the repair of mismatches in DNA. It is required for dam-dependent methyl-directed DNA mismatch repair. May act as a 'molecular matchmaker', a protein that promotes the formation of a stable complex between two or more DNA-binding proteins in an ATP-dependent manner without itself being part of a final effector complex. The sequence is that of DNA mismatch repair protein MutL from Xylella fastidiosa (strain M12).